Here is a 557-residue protein sequence, read N- to C-terminus: Potassium-transporting ATPase potassium-binding subunit (557 aa).

A run of 12 helical transmembrane segments spans residues 5-25 (GFLL…PLGS), 63-83 (LCAI…MLLG), 132-152 (GLTV…FALI), 170-190 (LLRI…LFFI), 253-273 (FVQM…FGEV), 283-303 (LLWA…WAEV), 329-349 (VLVS…AVIA), 356-376 (ALGG…FGGV), 379-399 (GLYG…LMIG), 416-436 (LTAL…ALAM), 484-504 (LLAF…MAIA), and 526-546 (LFVG…FIPA).

The protein belongs to the KdpA family. In terms of assembly, the system is composed of three essential subunits: KdpA, KdpB and KdpC.

It is found in the cell inner membrane. Functionally, part of the high-affinity ATP-driven potassium transport (or Kdp) system, which catalyzes the hydrolysis of ATP coupled with the electrogenic transport of potassium into the cytoplasm. This subunit binds the periplasmic potassium ions and delivers the ions to the membrane domain of KdpB through an intramembrane tunnel. This Escherichia coli O17:K52:H18 (strain UMN026 / ExPEC) protein is Potassium-transporting ATPase potassium-binding subunit.